The following is a 305-amino-acid chain: MSNLPFTVAALYCFAPLPQYESLREPLAQLCCANGIKGTLLLAAEGINGTVAGSAGAIEKLIAHITAIPGLGEPELKYSHASEMPFHRMKVRLKREIVTMGVEGIDPLKSVGTYIVPKDWNALIADENTVVVDTRNDYEYAIGTFEGAIDPQTRTFRAFPEWVKQNRDRLEGKKIAMFCTGGIRCEKATAFVKGLGFDDVYHLKGGILKYLEEVPREQSMWNGECFVFDERVAVGHGLAESDVELCRACRRPLTPQDKLSQFFEEGVSCAGCYAERTPEDRARYAERQKQVKLAEKRGANKHIGS.

Residues 125 to 219 (ADENTVVVDT…YLEEVPREQS (95 aa)) enclose the Rhodanese domain. Residue cysteine 179 is the Cysteine persulfide intermediate of the active site.

This sequence belongs to the TrhO family.

It carries out the reaction uridine(34) in tRNA + AH2 + O2 = 5-hydroxyuridine(34) in tRNA + A + H2O. Catalyzes oxygen-dependent 5-hydroxyuridine (ho5U) modification at position 34 in tRNAs. The chain is tRNA uridine(34) hydroxylase from Brucella suis (strain ATCC 23445 / NCTC 10510).